The sequence spans 273 residues: Ribosomal RNA small subunit methyltransferase A (273 aa).

Residues asparagine 19, leucine 21, glycine 46, glutamate 71, aspartate 94, and asparagine 117 each coordinate S-adenosyl-L-methionine.

Belongs to the class I-like SAM-binding methyltransferase superfamily. rRNA adenine N(6)-methyltransferase family. RsmA subfamily.

It is found in the cytoplasm. The catalysed reaction is adenosine(1518)/adenosine(1519) in 16S rRNA + 4 S-adenosyl-L-methionine = N(6)-dimethyladenosine(1518)/N(6)-dimethyladenosine(1519) in 16S rRNA + 4 S-adenosyl-L-homocysteine + 4 H(+). Functionally, specifically dimethylates two adjacent adenosines (A1518 and A1519) in the loop of a conserved hairpin near the 3'-end of 16S rRNA in the 30S particle. May play a critical role in biogenesis of 30S subunits. The chain is Ribosomal RNA small subunit methyltransferase A from Burkholderia ambifaria (strain MC40-6).